We begin with the raw amino-acid sequence, 255 residues long: 4-hydroxy-tetrahydrodipicolinate reductase (255 aa).

Residues 13 to 18, 90 to 92, and 114 to 117 contribute to the NAD(+) site; these read GCNGKM, CTT, and SANM. The active-site Proton donor/acceptor is the histidine 147. Histidine 148 serves as a coordination point for (S)-2,3,4,5-tetrahydrodipicolinate. Lysine 151 serves as the catalytic Proton donor. A (S)-2,3,4,5-tetrahydrodipicolinate-binding site is contributed by 157 to 158; that stretch reads GT.

This sequence belongs to the DapB family.

Its subcellular location is the cytoplasm. It catalyses the reaction (S)-2,3,4,5-tetrahydrodipicolinate + NAD(+) + H2O = (2S,4S)-4-hydroxy-2,3,4,5-tetrahydrodipicolinate + NADH + H(+). The enzyme catalyses (S)-2,3,4,5-tetrahydrodipicolinate + NADP(+) + H2O = (2S,4S)-4-hydroxy-2,3,4,5-tetrahydrodipicolinate + NADPH + H(+). The protein operates within amino-acid biosynthesis; L-lysine biosynthesis via DAP pathway; (S)-tetrahydrodipicolinate from L-aspartate: step 4/4. Catalyzes the conversion of 4-hydroxy-tetrahydrodipicolinate (HTPA) to tetrahydrodipicolinate. The polypeptide is 4-hydroxy-tetrahydrodipicolinate reductase (Clostridium tetani (strain Massachusetts / E88)).